The sequence spans 151 residues: Deoxyuridine 5'-triphosphate nucleotidohydrolase (151 aa).

Residues 70-72, Asn-83, 87-89, and Met-97 contribute to the substrate site; these read RSG and LID.

This sequence belongs to the dUTPase family. It depends on Mg(2+) as a cofactor.

The catalysed reaction is dUTP + H2O = dUMP + diphosphate + H(+). It functions in the pathway pyrimidine metabolism; dUMP biosynthesis; dUMP from dCTP (dUTP route): step 2/2. Functionally, this enzyme is involved in nucleotide metabolism: it produces dUMP, the immediate precursor of thymidine nucleotides and it decreases the intracellular concentration of dUTP so that uracil cannot be incorporated into DNA. The protein is Deoxyuridine 5'-triphosphate nucleotidohydrolase of Psychromonas ingrahamii (strain DSM 17664 / CCUG 51855 / 37).